A 252-amino-acid polypeptide reads, in one-letter code: Triosephosphate isomerase (252 aa).

10 to 12 is a binding site for substrate; it reads NWK. The Electrophile role is filled by H96. Residue E168 is the Proton acceptor of the active site. Residues G174, S214, and 235–236 each bind substrate; that span reads GG.

This sequence belongs to the triosephosphate isomerase family. As to quaternary structure, homodimer.

The protein localises to the cytoplasm. It carries out the reaction D-glyceraldehyde 3-phosphate = dihydroxyacetone phosphate. It participates in carbohydrate biosynthesis; gluconeogenesis. The protein operates within carbohydrate degradation; glycolysis; D-glyceraldehyde 3-phosphate from glycerone phosphate: step 1/1. Involved in the gluconeogenesis. Catalyzes stereospecifically the conversion of dihydroxyacetone phosphate (DHAP) to D-glyceraldehyde-3-phosphate (G3P). The protein is Triosephosphate isomerase of Lactobacillus acidophilus (strain ATCC 700396 / NCK56 / N2 / NCFM).